The chain runs to 147 residues: Hemoglobin subunit gamma-1 (147 aa).

Gly2 carries the post-translational modification N-acetylglycine. Residues 3–147 (HFTEEDKATI…VASALSSRYH (145 aa)) form the Globin domain. Thr13 bears the Phosphothreonine mark. A phosphoserine mark is found at Ser45, Ser51, and Ser53. Position 60 is an N6-acetyllysine (Lys60). Residue His64 participates in heme b binding. Lys83 is subject to N6-acetyllysine. Residue His93 coordinates heme b. At Cys94 the chain carries S-nitrosocysteine. Ser140 bears the Phosphoserine mark.

Belongs to the globin family. Heterotetramer of two alpha chains and two gamma chains in fetal hemoglobin (Hb F). As to expression, red blood cells.

Its function is as follows. Gamma chains make up the fetal hemoglobin F, in combination with alpha chains. The chain is Hemoglobin subunit gamma-1 (HBG1) from Pongo pygmaeus (Bornean orangutan).